A 59-amino-acid polypeptide reads, in one-letter code: Large ribosomal subunit protein bL33 (59 aa).

Positions 26-59 are disordered; that stretch reads RYTTTKNKKNNTERLVLKKYNPNLKKHTEHKEIK.

This sequence belongs to the bacterial ribosomal protein bL33 family.

This Chlorobium phaeobacteroides (strain BS1) protein is Large ribosomal subunit protein bL33.